The primary structure comprises 341 residues: Heat-inducible transcription repressor HrcA (341 aa).

It belongs to the HrcA family.

Negative regulator of class I heat shock genes (grpE-dnaK-dnaJ and groELS operons). Prevents heat-shock induction of these operons. The chain is Heat-inducible transcription repressor HrcA from Leptothrix cholodnii (strain ATCC 51168 / LMG 8142 / SP-6) (Leptothrix discophora (strain SP-6)).